We begin with the raw amino-acid sequence, 616 residues long: Chaperone protein HscA (616 aa).

Belongs to the heat shock protein 70 family.

Chaperone involved in the maturation of iron-sulfur cluster-containing proteins. Has a low intrinsic ATPase activity which is markedly stimulated by HscB. Involved in the maturation of IscU. The sequence is that of Chaperone protein HscA from Escherichia coli (strain SMS-3-5 / SECEC).